The sequence spans 1386 residues: YLP motif-containing protein 1 (1386 aa).

Disordered regions lie at residues 1 to 336 (MYPN…EDAR) and 517 to 1068 (TSIP…PPGR). Pro residues predominate over residues 14 to 27 (YPPPPVPPPPPPVA). Composition is skewed to low complexity over residues 31-50 (ASPGPGYSSSTAPAAPSSSG) and 59-80 (LAQLQQLQQMHQKQMQCVLQPH). 5 stretches are compositionally biased toward pro residues: residues 81 to 93 (HLPPPPLPPPPVM), 102 to 114 (QPPPPPMPPPPGP), 148 to 158 (PESPPVPPGSY), 166 to 176 (MPPPQPPPSYY), and 184 to 203 (YLPPAQPGPSKPQLPPPPSI). Over residues 237–259 (STMTPQEQQQYWYRQHLLSLQQR) the composition is skewed to polar residues. Residues 260-270 (TKVHLPGHKKG) are compositionally biased toward basic residues. Positions 276–285 (DVPEPIKEEA) are enriched in basic and acidic residues. A compositionally biased stretch (pro residues) spans 302–317 (PPLPPPNEEAPPPLSP). Acidic residues predominate over residues 320–333 (PQSEDSEDSEDSEE). 3 stretches are compositionally biased toward pro residues: residues 517-558 (TSIP…PPPA), 566-603 (PVLPPPALPGGPPILPLPPLSSATPPPGIPPPGAPQGM), and 641-650 (PPSPYHPPPQ). Positions 651–667 (SEQVNSKPLNKVFSSEQ) are enriched in polar residues. N6-methyllysine is present on lysine 683. The span at 706 to 722 (RGPREQKEQLQKLKDFG) shows a compositional bias: basic and acidic residues. The segment covering 746-761 (MYPPPGSYRPPPPMGK) has biased composition (pro residues). Over residues 762 to 779 (PPGSIVRPSAPPARSSIP) the composition is skewed to low complexity. 2 stretches are compositionally biased toward pro residues: residues 781-803 (TRPPVPIPPPPPPPPPPPPPPPV) and 848-878 (PVLPPPPVHSSIPPPGPMPMGMPPMSKPPPV). Residue lysine 894 forms a Glycyl lysine isopeptide (Lys-Gly) (interchain with G-Cter in SUMO2) linkage. 4 stretches are compositionally biased toward basic and acidic residues: residues 904–938 (ITLRPDPLPERSTFDADHAGQRDRYDRDRDREPYF), 945–1014 (TDHR…DRPP), 1023–1033 (GERRTYPEERM), and 1049–1068 (RVEKKPESKNVDDILKPPGR). Residue lysine 951 forms a Glycyl lysine isopeptide (Lys-Gly) (interchain with G-Cter in SUMO2) linkage. Positions 1336–1343 (KKRVRWAD) are involved in interaction with PPP1CA.

Interacts with PPP1CA and NCOA5. Forms a complex with ILF2, ILF3, KHDRBS1, RBMX, NCOA5 and PPP1CA.

The protein localises to the nucleus. The protein resides in the nucleus speckle. Plays a role in the reduction of telomerase activity during differentiation of embryonic stem cells by binding to the core promoter of TERT and controlling its down-regulation. This Mus musculus (Mouse) protein is YLP motif-containing protein 1 (Ylpm1).